The chain runs to 135 residues: Large ribosomal subunit protein uL16c (135 aa).

Residues 1–23 (MLSPKKTKFRKEHRGRMKGRSSR) show a composition bias toward basic residues. Residues 1–24 (MLSPKKTKFRKEHRGRMKGRSSRG) are disordered.

Belongs to the universal ribosomal protein uL16 family. As to quaternary structure, part of the 50S ribosomal subunit.

The protein localises to the plastid. It is found in the chloroplast. In Pelargonium hortorum (Common geranium), this protein is Large ribosomal subunit protein uL16c.